Here is a 302-residue protein sequence, read N- to C-terminus: MASKASVAIVGSGNISTDLLYKLQRSEWLEPRWMIGIDPESEGLKRARGFGLETSHEGVDWLLGQDEKPDLVFEATSAYVHKAAAPRYEEAGIRAIDLTPAAVGPAVVPPANLRAHLDAPNVNMITCGGQATIPIVYAVSRVVEVPYAEIVASVASVSAGPGTRANIDEFTKTTSKGVEVIGGAKRGKAIIILNPADPPMIMRDTIFCAIPEDADRAAIAASIHDVVSQVQQYVPGYRLLNEPQFDEPSVVNGGNHVVTTFVEVEGAGDFLPPYAGNLDIMTAAATKVGEEIAKELLSAKVS.

12–15 contacts NAD(+); the sequence is SGNI. Catalysis depends on Cys-127, which acts as the Acyl-thioester intermediate. Residues 158–166 and Asn-277 each bind NAD(+); that span reads SAGPGTRAN.

Belongs to the acetaldehyde dehydrogenase family.

It catalyses the reaction acetaldehyde + NAD(+) + CoA = acetyl-CoA + NADH + H(+). The sequence is that of Acetaldehyde dehydrogenase 1 from Mycobacteroides abscessus (strain ATCC 19977 / DSM 44196 / CCUG 20993 / CIP 104536 / JCM 13569 / NCTC 13031 / TMC 1543 / L948) (Mycobacterium abscessus).